The primary structure comprises 365 residues: Serine/threonine-protein phosphatase 2A activator 1 (365 aa).

Residues 321-349 (YEAPSETSEKPAAGTAHTTTTTMPPPRMT) form a disordered region. Over residues 331–342 (PAAGTAHTTTTT) the composition is skewed to low complexity.

The protein belongs to the PTPA-type PPIase family.

The protein resides in the cytoplasm. It localises to the nucleus. It catalyses the reaction [protein]-peptidylproline (omega=180) = [protein]-peptidylproline (omega=0). Its function is as follows. PPIases accelerate the folding of proteins. It catalyzes the cis-trans isomerization of proline imidic peptide bonds in oligopeptides. Acts as a regulatory subunit for PP2A-like phosphatases modulating their activity or substrate specificity, probably by inducing a conformational change in the catalytic subunit, a direct target of the PPIase. Can reactivate inactive phosphatase PP2A-phosphatase methylesterase complexes (PP2Ai) in presence of ATP and Mg(2+) by dissociating the inactive form from the complex. The sequence is that of Serine/threonine-protein phosphatase 2A activator 1 (RRD1) from Eremothecium gossypii (strain ATCC 10895 / CBS 109.51 / FGSC 9923 / NRRL Y-1056) (Yeast).